A 509-amino-acid polypeptide reads, in one-letter code: Hexokinase-4, chloroplastic (509 aa).

The N-terminal 37 residues, 1 to 37 (MSAAAAIASPIPAAIAVVQQQRRGRSRGGGSGAAAVR), are a transit peptide targeting the chloroplast. One can recognise a Hexokinase domain in the interval 45-496 (SAIAPILADL…SGIGAALLAA (452 aa)). The interval 100–238 (TGNETGLFYA…GLDMRVSALV (139 aa)) is hexokinase small subdomain. 3 residues coordinate ADP: Gly-114, Thr-115, and Asn-116. Residues Thr-204, Lys-205, Asn-239, and Asp-240 each coordinate D-glucose. The tract at residues 239-485 (NDTVGTLAGA…NRIAIEHTKD (247 aa)) is hexokinase large subdomain. Thr-263 is a binding site for ADP. Residues Asn-266, Glu-294, and Glu-324 each coordinate D-glucose. Gly-450 contributes to the ADP binding site.

This sequence belongs to the hexokinase family. As to expression, expressed in roots, leaves, flowers, immature seeds, endosperm and seed coat.

It is found in the plastid. Its subcellular location is the chloroplast stroma. It carries out the reaction a D-hexose + ATP = a D-hexose 6-phosphate + ADP + H(+). It catalyses the reaction D-fructose + ATP = D-fructose 6-phosphate + ADP + H(+). The enzyme catalyses D-glucose + ATP = D-glucose 6-phosphate + ADP + H(+). It functions in the pathway carbohydrate metabolism; hexose metabolism. Its pathway is carbohydrate degradation; glycolysis; D-glyceraldehyde 3-phosphate and glycerone phosphate from D-glucose: step 1/4. Functionally, fructose and glucose phosphorylating enzyme. In Oryza sativa subsp. japonica (Rice), this protein is Hexokinase-4, chloroplastic (HXK4).